The sequence spans 482 residues: Ras GTPase-activating protein-binding protein 2 (482 aa).

One can recognise an NTF2 domain in the interval 11 to 133 (VGREFVRQYY…FYVHNDMFRY (123 aa)). A compositionally biased stretch (acidic residues) spans 140–158 (DSEPELDEESEDEVEEEQE). 2 disordered regions span residues 140 to 170 (DSEPELDEESEDEVEEEQEDRQPSPEPVQEN) and 187 to 318 (EPLE…EQND). Phosphoserine occurs at positions 141, 149, and 225. Residues 142–220 (EPELDEESED…PQVEEKHLEE (79 aa)) form an acidic disordered region region. Residues 191 to 225 (ESSHEPEPEPESETKTEELKPQVEEKHLEELEEKS) show a composition bias toward basic and acidic residues. The residue at position 227 (threonine 227) is a Phosphothreonine. Residues 247–264 (ASVTSKNLPPSGTVSSSG) show a composition bias toward polar residues. A Glycyl lysine isopeptide (Lys-Gly) (interchain with G-Cter in SUMO2) cross-link involves residue lysine 281. The span at 290–300 (RVREQRPRERP) shows a compositional bias: basic and acidic residues. Positions 331–409 (HQLFVGNLPH…VRLNVEEKKT (79 aa)) constitute an RRM domain. Lysine 392 is modified (N6-succinyllysine). The interval 404 to 476 (VEEKKTRAAR…GRGTGQMEGR (73 aa)) is RG-rich region. The segment covering 408-432 (KTRAARERETRGGGDDRRDIRRNDR) has biased composition (basic and acidic residues). Residues 408 to 482 (KTRAARERET…MEGRFTGQRR (75 aa)) form a disordered region. Gly residues predominate over residues 433–445 (GPGGPRGIVGGGM). The residue at position 457 (arginine 457) is an Omega-N-methylarginine. Serine 466 bears the Phosphoserine mark. Arginine 468 is modified (omega-N-methylarginine).

Forms homooligomers. Forms heterodimers with G3BP1. Interacts with NFKBIA (via N-terminus). Interacts (via NTF2 domain) with USP10; inhibiting stress granule formation. Interacts (via NTF2 domain) with CAPRIN1; promoting stress granule formation. Associates (via RG-rich region) with 40S ribosome subunits. Interacts with PABPC1.

It is found in the cytoplasm. It localises to the stress granule. Under physiological conditions, G3BP2 adopts a compact state that is stabilized by intramolecular interactions between the RG-rich and the acidic regions that inhibit phase separation. Upon stress, polysomes disassemble and mRNAs are released in an unfolded protein-free state. Binding of unfolded mRNA to G3BP2 outcompetes the intramolecular interactions and RNA-bound G3BP2 adopts an expanded conformation in which the RG-rich region becomes exposed to engage in protein-protein and protein-RNA interactions, allowing physical cross-linking of RNA molecules to form protein-RNA condensates, leading to liquid-liquid phase separation (LLPS). Its function is as follows. Scaffold protein that plays an essential role in cytoplasmic stress granule formation which acts as a platform for antiviral signaling. Plays an essential role in stress granule formation. Stress granules are membraneless compartments that store mRNAs and proteins, such as stalled translation pre-initiation complexes, in response to stress. Promotes formation of stress granules phase-separated membraneless compartment by undergoing liquid-liquid phase separation (LLPS) upon unfolded RNA-binding: functions as a molecular switch that triggers RNA-dependent LLPS in response to a rise in intracellular free RNA concentrations. The polypeptide is Ras GTPase-activating protein-binding protein 2 (G3bp2) (Mus musculus (Mouse)).